A 430-amino-acid polypeptide reads, in one-letter code: Adenylosuccinate synthetase (430 aa).

GTP contacts are provided by residues Gly-12–Lys-18 and Gly-40–Thr-42. The active-site Proton acceptor is Asp-13. The Mg(2+) site is built by Asp-13 and Gly-40. IMP is bound by residues Asp-13–Lys-16, Asn-38–His-41, Thr-128, Arg-142, Gln-223, Thr-238, and Arg-302. Residue His-41 is the Proton donor of the active site. Residue Thr-298 to Arg-304 participates in substrate binding. GTP contacts are provided by residues Arg-304, Ser-330 to Asp-332, and Ser-412 to Gly-414.

It belongs to the adenylosuccinate synthetase family. Homodimer. Mg(2+) serves as cofactor.

It is found in the cytoplasm. It carries out the reaction IMP + L-aspartate + GTP = N(6)-(1,2-dicarboxyethyl)-AMP + GDP + phosphate + 2 H(+). It participates in purine metabolism; AMP biosynthesis via de novo pathway; AMP from IMP: step 1/2. In terms of biological role, plays an important role in the de novo pathway of purine nucleotide biosynthesis. Catalyzes the first committed step in the biosynthesis of AMP from IMP. The sequence is that of Adenylosuccinate synthetase from Exiguobacterium sibiricum (strain DSM 17290 / CCUG 55495 / CIP 109462 / JCM 13490 / 255-15).